The following is a 407-amino-acid chain: S-adenosylmethionine synthase (407 aa).

Gly-140 to Asp-145 is an ATP binding site.

The protein belongs to the AdoMet synthase 2 family. Mg(2+) is required as a cofactor.

It carries out the reaction L-methionine + ATP + H2O = S-adenosyl-L-methionine + phosphate + diphosphate. The protein operates within amino-acid biosynthesis; S-adenosyl-L-methionine biosynthesis; S-adenosyl-L-methionine from L-methionine: step 1/1. Catalyzes the formation of S-adenosylmethionine from methionine and ATP. The protein is S-adenosylmethionine synthase of Methanosphaera stadtmanae (strain ATCC 43021 / DSM 3091 / JCM 11832 / MCB-3).